Here is a 440-residue protein sequence, read N- to C-terminus: Transposon Ty1-BL Gag polyprotein (440 aa).

Composition is skewed to polar residues over residues 20–31 (SVTSKEVQTTQD), 46–55 (VSTQANSQQP), and 137–168 (VGTHLNTPSPESGNSFPDSSSAKSNMTSTNQH). Disordered stretches follow at residues 20 to 84 (SVTS…QNGP), 137 to 173 (VGTHLNTPSPESGNSFPDSSSAKSNMTSTNQHVRPPP), and 350 to 424 (QQES…TTEP). Positions 299-401 (NNGIPINNKV…NSQSRTARAH (103 aa)) are RNA-binding. Over residues 363–372 (SPSDEKKDSR) the composition is skewed to basic and acidic residues. Residues 373 to 411 (TYTNTTKPKSITRNSQKPNNSQSRTARAHNVSTFNNSPG) are compositionally biased toward polar residues.

Homotrimer.

It localises to the cytoplasm. In terms of biological role, capsid protein (CA) is the structural component of the virus-like particle (VLP), forming the shell that encapsulates the retrotransposons dimeric RNA genome. The particles are assembled from trimer-clustered units and there are holes in the capsid shells that allow for the diffusion of macromolecules. CA also has nucleocapsid-like chaperone activity, promoting primer tRNA(i)-Met annealing to the multipartite primer-binding site (PBS), dimerization of Ty1 RNA and initiation of reverse transcription. The polypeptide is Transposon Ty1-BL Gag polyprotein (TY1A-BL) (Saccharomyces cerevisiae (strain ATCC 204508 / S288c) (Baker's yeast)).